We begin with the raw amino-acid sequence, 493 residues long: UDP-N-acetylmuramoyl-L-alanyl-D-glutamate--2,6-diaminopimelate ligase (493 aa).

T32 provides a ligand contact to UDP-N-acetyl-alpha-D-muramoyl-L-alanyl-D-glutamate. 110-116 contributes to the ATP binding site; that stretch reads GTNGKTT. Residues N151, 152 to 153, S179, and R187 contribute to the UDP-N-acetyl-alpha-D-muramoyl-L-alanyl-D-glutamate site; that span reads TT. The residue at position 219 (K219) is an N6-carboxylysine. Meso-2,6-diaminopimelate is bound by residues R386, 410 to 413, G460, and E464; that span reads DNPR. The Meso-diaminopimelate recognition motif signature appears at 410–413; sequence DNPR.

The protein belongs to the MurCDEF family. MurE subfamily. The cofactor is Mg(2+). Carboxylation is probably crucial for Mg(2+) binding and, consequently, for the gamma-phosphate positioning of ATP.

Its subcellular location is the cytoplasm. The enzyme catalyses UDP-N-acetyl-alpha-D-muramoyl-L-alanyl-D-glutamate + meso-2,6-diaminopimelate + ATP = UDP-N-acetyl-alpha-D-muramoyl-L-alanyl-gamma-D-glutamyl-meso-2,6-diaminopimelate + ADP + phosphate + H(+). It functions in the pathway cell wall biogenesis; peptidoglycan biosynthesis. Its function is as follows. Catalyzes the addition of meso-diaminopimelic acid to the nucleotide precursor UDP-N-acetylmuramoyl-L-alanyl-D-glutamate (UMAG) in the biosynthesis of bacterial cell-wall peptidoglycan. The sequence is that of UDP-N-acetylmuramoyl-L-alanyl-D-glutamate--2,6-diaminopimelate ligase from Lactiplantibacillus plantarum (strain ATCC BAA-793 / NCIMB 8826 / WCFS1) (Lactobacillus plantarum).